The primary structure comprises 116 residues: Cocaine- and amphetamine-regulated transcript protein (116 aa).

The N-terminal stretch at 1–27 is a signal peptide; sequence MESSRVRLLPLLGAALLLMLPLLGTRA. Tyrosine 41 carries the post-translational modification Phosphotyrosine. The residue at position 48 (serine 48) is a Phosphoserine. Cystine bridges form between cysteine 82-cysteine 100, cysteine 88-cysteine 108, and cysteine 102-cysteine 115.

It belongs to the CART family. As to expression, hypothalamus. Found in neurons of the ventrolateral part of the arcuate nucleus, in the external zone of the median eminence, and also found in terminals in the periventricular part of the paraventricular nucleus.

Its subcellular location is the secreted. In terms of biological role, satiety factor closely associated with the actions of leptin and neuropeptide Y; this anorectic peptide inhibits both normal and starvation-induced feeding and completely blocks the feeding response induced by neuropeptide Y and regulated by leptin in the hypothalamus. It promotes neuronal development and survival in vitro. This Homo sapiens (Human) protein is Cocaine- and amphetamine-regulated transcript protein (CARTPT).